We begin with the raw amino-acid sequence, 89 residues long: Small ribosomal subunit protein bS20 (89 aa).

Disordered regions lie at residues methionine 1–lysine 25 and lysine 69–serine 89. Residues alanine 7–histidine 20 show a composition bias toward basic residues.

The protein belongs to the bacterial ribosomal protein bS20 family.

In terms of biological role, binds directly to 16S ribosomal RNA. This Geobacillus thermodenitrificans (strain NG80-2) protein is Small ribosomal subunit protein bS20.